Consider the following 444-residue polypeptide: Protein kinase C and casein kinase substrate in neurons protein 1 (444 aa).

Phosphoserine is present on residues Ser-2 and Ser-79. In terms of domain architecture, F-BAR spans 13-283 (EETTDSFWEV…AIRGADAQDD (271 aa)). Residues 26–275 (KRTVKRIDDG…QVYRELEQAI (250 aa)) adopt a coiled-coil conformation. Position 184 is a phosphothreonine (Thr-184). The segment at 313 to 384 (AAKKEKQPKK…NGGSNPFDED (72 aa)) is disordered. Residues 314-324 (AKKEKQPKKAE) show a composition bias toward basic and acidic residues. The segment covering 336–358 (ESTSQAGDRGSVSSYDRGQTYAT) has biased composition (polar residues). Phosphoserine is present on residues Ser-346, Ser-348, Ser-349, Ser-361, and Ser-365. In terms of domain architecture, SH3 spans 385-444 (AKGVRVRALYDYDGQEQDELSFKAGDELTKLGEEDEQGWCRGRLDSGQLGLYPANYVEVV). Phosphotyrosine is present on Tyr-394. Phosphoserine occurs at positions 405 and 430.

It belongs to the PACSIN family. In terms of assembly, homodimer. May form heterooligomers with other PACSINs. Interacts with MAPT. Interacts (via SH3 domain) with SYNJ1 and WASL. Interacts (via SH3 domain) with DNM1; the interaction is reduced by DNM1 phosphorylation. Interacts with DNM2 and DNM3. Interacts with both COBL and DBNL. Identified in a complex composed of COBL, PACSIN1 and WASL. Interacts with EHD1 and EHD3. Interacts with TRPV4. Post-translationally, phosphorylated by casein kinase 2 (CK2) and protein kinase C (PKC).

It localises to the cytoplasm. The protein resides in the cell projection. It is found in the synapse. The protein localises to the synaptosome. Its subcellular location is the ruffle membrane. It localises to the membrane. The protein resides in the cytoplasmic vesicle membrane. It is found in the cytosol. The protein localises to the cell membrane. Binds to membranes via its F-BAR domain and mediates membrane tubulation. Plays a role in the reorganization of the microtubule cytoskeleton via its interaction with MAPT; this decreases microtubule stability and inhibits MAPT-induced microtubule polymerization. Plays a role in cellular transport processes by recruiting DNM1, DNM2 and DNM3 to membranes. Plays a role in the reorganization of the actin cytoskeleton and in neuron morphogenesis via its interaction with COBL and WASL, and by recruiting COBL to the cell cortex. Plays a role in the regulation of neurite formation, neurite branching and the regulation of neurite length. Required for normal synaptic vesicle endocytosis; this process retrieves previously released neurotransmitters to accommodate multiple cycles of neurotransmission. Required for normal excitatory and inhibitory synaptic transmission. This chain is Protein kinase C and casein kinase substrate in neurons protein 1 (PACSIN1), found in Bos taurus (Bovine).